A 521-amino-acid chain; its full sequence is Type-2 serine--tRNA ligase (521 aa).

Position 316 (A316) interacts with L-serine. C318 contributes to the Zn(2+) binding site. R347 contributes to the L-serine binding site. ATP is bound by residues R347–E349 and R358–V359. R364–E366 serves as a coordination point for L-serine. Residues E366 and C473 each contribute to the Zn(2+) site. R480 contacts ATP.

The protein belongs to the class-II aminoacyl-tRNA synthetase family. Type-2 seryl-tRNA synthetase subfamily. As to quaternary structure, homodimer. It depends on Zn(2+) as a cofactor.

The protein localises to the cytoplasm. It carries out the reaction tRNA(Ser) + L-serine + ATP = L-seryl-tRNA(Ser) + AMP + diphosphate + H(+). The catalysed reaction is tRNA(Sec) + L-serine + ATP = L-seryl-tRNA(Sec) + AMP + diphosphate + H(+). The protein operates within aminoacyl-tRNA biosynthesis; selenocysteinyl-tRNA(Sec) biosynthesis; L-seryl-tRNA(Sec) from L-serine and tRNA(Sec): step 1/1. In terms of biological role, catalyzes the attachment of serine to tRNA(Ser). Is also able to aminoacylate tRNA(Sec) with serine, to form the misacylated tRNA L-seryl-tRNA(Sec), which will be further converted into selenocysteinyl-tRNA(Sec). The polypeptide is Type-2 serine--tRNA ligase (serS) (Methanocaldococcus jannaschii (strain ATCC 43067 / DSM 2661 / JAL-1 / JCM 10045 / NBRC 100440) (Methanococcus jannaschii)).